A 318-amino-acid chain; its full sequence is Acetyl-coenzyme A carboxylase carboxyl transferase subunit alpha (318 aa).

One can recognise a CoA carboxyltransferase C-terminal domain in the interval 34-295; the sequence is SIEEEITKLR…KATIKQQLAQ (262 aa).

This sequence belongs to the AccA family. As to quaternary structure, acetyl-CoA carboxylase is a heterohexamer composed of biotin carboxyl carrier protein (AccB), biotin carboxylase (AccC) and two subunits each of ACCase subunit alpha (AccA) and ACCase subunit beta (AccD).

The protein resides in the cytoplasm. It carries out the reaction N(6)-carboxybiotinyl-L-lysyl-[protein] + acetyl-CoA = N(6)-biotinyl-L-lysyl-[protein] + malonyl-CoA. The protein operates within lipid metabolism; malonyl-CoA biosynthesis; malonyl-CoA from acetyl-CoA: step 1/1. Component of the acetyl coenzyme A carboxylase (ACC) complex. First, biotin carboxylase catalyzes the carboxylation of biotin on its carrier protein (BCCP) and then the CO(2) group is transferred by the carboxyltransferase to acetyl-CoA to form malonyl-CoA. This chain is Acetyl-coenzyme A carboxylase carboxyl transferase subunit alpha, found in Pseudoalteromonas atlantica (strain T6c / ATCC BAA-1087).